The following is a 423-amino-acid chain: Serine hydroxymethyltransferase (423 aa).

(6S)-5,6,7,8-tetrahydrofolate is bound by residues Leu-125 and Gly-129–Leu-131. Residue Lys-234 is modified to N6-(pyridoxal phosphate)lysine. Glu-249 is a binding site for (6S)-5,6,7,8-tetrahydrofolate.

Belongs to the SHMT family. Homodimer. It depends on pyridoxal 5'-phosphate as a cofactor.

Its subcellular location is the cytoplasm. The enzyme catalyses (6R)-5,10-methylene-5,6,7,8-tetrahydrofolate + glycine + H2O = (6S)-5,6,7,8-tetrahydrofolate + L-serine. It functions in the pathway one-carbon metabolism; tetrahydrofolate interconversion. It participates in amino-acid biosynthesis; glycine biosynthesis; glycine from L-serine: step 1/1. Its function is as follows. Catalyzes the reversible interconversion of serine and glycine with tetrahydrofolate (THF) serving as the one-carbon carrier. This reaction serves as the major source of one-carbon groups required for the biosynthesis of purines, thymidylate, methionine, and other important biomolecules. Also exhibits THF-independent aldolase activity toward beta-hydroxyamino acids, producing glycine and aldehydes, via a retro-aldol mechanism. This chain is Serine hydroxymethyltransferase, found in Thermobifida fusca (strain YX).